Reading from the N-terminus, the 509-residue chain is Maturase K (509 aa).

The protein belongs to the intron maturase 2 family. MatK subfamily.

It is found in the plastid. The protein localises to the chloroplast. Its function is as follows. Usually encoded in the trnK tRNA gene intron. Probably assists in splicing its own and other chloroplast group II introns. This is Maturase K from Eucommia ulmoides (Hardy rubber tree).